A 361-amino-acid polypeptide reads, in one-letter code: Peptide chain release factor 1 (361 aa).

Gln235 carries the post-translational modification N5-methylglutamine. The tract at residues 286–305 is disordered; that stretch reads IDSARSAERKQKVGSGDRSE.

Belongs to the prokaryotic/mitochondrial release factor family. Methylated by PrmC. Methylation increases the termination efficiency of RF1.

Its subcellular location is the cytoplasm. Peptide chain release factor 1 directs the termination of translation in response to the peptide chain termination codons UAG and UAA. The sequence is that of Peptide chain release factor 1 from Rhodopseudomonas palustris (strain HaA2).